The chain runs to 568 residues: Small ribosomal subunit protein bS1 (568 aa).

6 S1 motif domains span residues 39–100, 118–184, 205–273, 290–360, 377–447, and 464–533; these read KTVV…LSRE, GEFV…VSRR, GMVL…LGIK, GKQM…LSIK, GTII…LGIK, and GTIV…LSVK.

Belongs to the bacterial ribosomal protein bS1 family.

In terms of biological role, binds mRNA; thus facilitating recognition of the initiation point. It is needed to translate mRNA with a short Shine-Dalgarno (SD) purine-rich sequence. This is Small ribosomal subunit protein bS1 (rpsA) from Rickettsia conorii (strain ATCC VR-613 / Malish 7).